We begin with the raw amino-acid sequence, 486 residues long: Glutamate--tRNA ligase (486 aa).

The 'HIGH' region motif lies at 11-21 (PSPTGFLHIGG). Zn(2+)-binding residues include C108, C110, C136, and H138. The short motif at 253 to 257 (KLSKR) is the 'KMSKS' region element. ATP is bound at residue K256.

It belongs to the class-I aminoacyl-tRNA synthetase family. Glutamate--tRNA ligase type 1 subfamily. Monomer. Zn(2+) is required as a cofactor.

It localises to the cytoplasm. It catalyses the reaction tRNA(Glu) + L-glutamate + ATP = L-glutamyl-tRNA(Glu) + AMP + diphosphate. Its function is as follows. Catalyzes the attachment of glutamate to tRNA(Glu) in a two-step reaction: glutamate is first activated by ATP to form Glu-AMP and then transferred to the acceptor end of tRNA(Glu). The protein is Glutamate--tRNA ligase of Lysinibacillus sphaericus (strain C3-41).